The chain runs to 642 residues: Threonine--tRNA ligase (642 aa).

Residues 1 to 61 form the TGS domain; it reads MPVITLPDGS…ETDAELSIIT (61 aa). Residues 243–534 are catalytic; that stretch reads DHRKIGKQLD…LIEEYAGRFP (292 aa). The Zn(2+) site is built by Cys334, His385, and His511.

This sequence belongs to the class-II aminoacyl-tRNA synthetase family. As to quaternary structure, homodimer. The cofactor is Zn(2+).

Its subcellular location is the cytoplasm. It carries out the reaction tRNA(Thr) + L-threonine + ATP = L-threonyl-tRNA(Thr) + AMP + diphosphate + H(+). Functionally, catalyzes the attachment of threonine to tRNA(Thr) in a two-step reaction: L-threonine is first activated by ATP to form Thr-AMP and then transferred to the acceptor end of tRNA(Thr). Also edits incorrectly charged L-seryl-tRNA(Thr). This Shewanella sp. (strain MR-7) protein is Threonine--tRNA ligase.